An 89-amino-acid chain; its full sequence is Small ribosomal subunit protein uS15 (89 aa).

The protein belongs to the universal ribosomal protein uS15 family. In terms of assembly, part of the 30S ribosomal subunit. Forms a bridge to the 50S subunit in the 70S ribosome, contacting the 23S rRNA.

In terms of biological role, one of the primary rRNA binding proteins, it binds directly to 16S rRNA where it helps nucleate assembly of the platform of the 30S subunit by binding and bridging several RNA helices of the 16S rRNA. Its function is as follows. Forms an intersubunit bridge (bridge B4) with the 23S rRNA of the 50S subunit in the ribosome. This is Small ribosomal subunit protein uS15 from Chlamydia abortus (strain DSM 27085 / S26/3) (Chlamydophila abortus).